We begin with the raw amino-acid sequence, 535 residues long: uncharacterized protein (535 aa).

The helical transmembrane segment at 8 to 24 (LVVFGSLVFFFGLVKYF) threads the bilayer. Residue lysine 50 forms a Glycyl lysine isopeptide (Lys-Gly) (interchain with G-Cter in ubiquitin) linkage. Mn(2+)-binding residues include aspartate 316, aspartate 327, histidine 412, glutamate 452, and glutamate 493.

It belongs to the peptidase M24B family. The cofactor is Mn(2+).

The protein localises to the membrane. This is an uncharacterized protein from Saccharomyces cerevisiae (strain ATCC 204508 / S288c) (Baker's yeast).